We begin with the raw amino-acid sequence, 1589 residues long: Pentafunctional AROM polypeptide (1589 aa).

Positions 1 to 392 are 3-dehydroquinate synthase; sequence MVKFEKVPIL…YGKSAHYVND (392 aa). NAD(+)-binding positions include 43–45, 78–81, 109–111, and D114; these read DTN, EANK, and GGI. R125 contacts 7-phospho-2-dehydro-3-deoxy-D-arabino-heptonate. 134-135 lines the NAD(+) pocket; that stretch reads TS. 7-phospho-2-dehydro-3-deoxy-D-arabino-heptonate-binding residues include D141 and K147. K156 is an NAD(+) binding site. N157 lines the 7-phospho-2-dehydro-3-deoxy-D-arabino-heptonate pocket. Residues 174–177 and N185 contribute to the NAD(+) site; that span reads WLET. Residue E189 participates in Zn(2+) binding. 7-phospho-2-dehydro-3-deoxy-D-arabino-heptonate-binding positions include 189-192 and K258; that span reads EVIK. E268 functions as the Proton acceptor; for 3-dehydroquinate synthase activity in the catalytic mechanism. Residues 272-276 and H279 each bind 7-phospho-2-dehydro-3-deoxy-D-arabino-heptonate; that span reads RNLLN. H279 is a Zn(2+) binding site. H283 functions as the Proton acceptor; for 3-dehydroquinate synthase activity in the catalytic mechanism. 7-phospho-2-dehydro-3-deoxy-D-arabino-heptonate-binding residues include H295 and K364. H295 contributes to the Zn(2+) binding site. The interval 405-872 is EPSP synthase; it reads VYPFSNIPQE…WDVLHTELGA (468 aa). C854 (for EPSP synthase activity) is an active-site residue. Residues 891–1081 are shikimate kinase; it reads SVVLIGMRAA…VPNKRSAFVC (191 aa). 896–903 is a binding site for ATP; it reads GMRAAGKS. The interval 1082–1294 is 3-dehydroquinase; that stretch reads LTFGDLTEKA…SAPGQLTLAQ (213 aa). The Proton acceptor; for 3-dehydroquinate dehydratase activity role is filled by H1199. The active-site Schiff-base intermediate with substrate; for 3-dehydroquinate dehydratase activity is the K1228. Residues 1307–1589 are shikimate dehydrogenase; the sequence is SKKFFVVGNP…QEIFNAVTRD (283 aa).

In the N-terminal section; belongs to the sugar phosphate cyclases superfamily. Dehydroquinate synthase family. The protein in the 2nd section; belongs to the EPSP synthase family. This sequence in the 3rd section; belongs to the shikimate kinase family. It in the 4th section; belongs to the type-I 3-dehydroquinase family. In the C-terminal section; belongs to the shikimate dehydrogenase family. As to quaternary structure, homodimer. Requires Zn(2+) as cofactor.

Its subcellular location is the cytoplasm. It carries out the reaction 7-phospho-2-dehydro-3-deoxy-D-arabino-heptonate = 3-dehydroquinate + phosphate. The enzyme catalyses 3-dehydroquinate = 3-dehydroshikimate + H2O. It catalyses the reaction shikimate + NADP(+) = 3-dehydroshikimate + NADPH + H(+). The catalysed reaction is shikimate + ATP = 3-phosphoshikimate + ADP + H(+). It carries out the reaction 3-phosphoshikimate + phosphoenolpyruvate = 5-O-(1-carboxyvinyl)-3-phosphoshikimate + phosphate. Its pathway is metabolic intermediate biosynthesis; chorismate biosynthesis; chorismate from D-erythrose 4-phosphate and phosphoenolpyruvate: step 2/7. The protein operates within metabolic intermediate biosynthesis; chorismate biosynthesis; chorismate from D-erythrose 4-phosphate and phosphoenolpyruvate: step 3/7. It functions in the pathway metabolic intermediate biosynthesis; chorismate biosynthesis; chorismate from D-erythrose 4-phosphate and phosphoenolpyruvate: step 4/7. It participates in metabolic intermediate biosynthesis; chorismate biosynthesis; chorismate from D-erythrose 4-phosphate and phosphoenolpyruvate: step 5/7. Its pathway is metabolic intermediate biosynthesis; chorismate biosynthesis; chorismate from D-erythrose 4-phosphate and phosphoenolpyruvate: step 6/7. Its function is as follows. The AROM polypeptide catalyzes 5 consecutive enzymatic reactions in prechorismate polyaromatic amino acid biosynthesis. The sequence is that of Pentafunctional AROM polypeptide from Zygosaccharomyces rouxii (strain ATCC 2623 / CBS 732 / NBRC 1130 / NCYC 568 / NRRL Y-229).